Reading from the N-terminus, the 414-residue chain is MFSKDQTLAKTDTELWSAIQQENTRQQDHIELIASENYTSPAVMEAQGSQLTNKYAEGYPGKRYYGGCEYVDIVEQLAIDRVKKLFGAEAANVQPNSGSQANQGVFFAVLKPGDTIMGMSLAEGGHLTHGMALNMSGKWFNVVSYGLNDKEEIDYEQMERLAREHKPKMIIAGASAYALRIDFERFAKIAKEIGAYFMVDMAHYAGLIAAGEYPNPVPYADFVTSTTHKSLRGPRGGFILMKAEHEKIINSAIFPGIQGGPLMHVIAGKAVAFKEALAPEFKVYQQQVLKNADALAKALIARGLRIVSNRTESHVMLVDLRAKKITGKDAEALLGSAHITTNKNGIPNDPEKPFVSSGIRLGSPAMTTRGFKEAEATKVGNLIADVLDNPNDAATIERVKAEVKKLTDAFPVYG.

(6S)-5,6,7,8-tetrahydrofolate-binding positions include L121 and 125-127 (GHL). K229 is modified (N6-(pyridoxal phosphate)lysine).

The protein belongs to the SHMT family. In terms of assembly, homodimer. The cofactor is pyridoxal 5'-phosphate.

It localises to the cytoplasm. It carries out the reaction (6R)-5,10-methylene-5,6,7,8-tetrahydrofolate + glycine + H2O = (6S)-5,6,7,8-tetrahydrofolate + L-serine. The protein operates within one-carbon metabolism; tetrahydrofolate interconversion. It functions in the pathway amino-acid biosynthesis; glycine biosynthesis; glycine from L-serine: step 1/1. Its function is as follows. Catalyzes the reversible interconversion of serine and glycine with tetrahydrofolate (THF) serving as the one-carbon carrier. This reaction serves as the major source of one-carbon groups required for the biosynthesis of purines, thymidylate, methionine, and other important biomolecules. Also exhibits THF-independent aldolase activity toward beta-hydroxyamino acids, producing glycine and aldehydes, via a retro-aldol mechanism. The chain is Serine hydroxymethyltransferase from Herminiimonas arsenicoxydans.